A 185-amino-acid polypeptide reads, in one-letter code: NEDD8-conjugating enzyme UBE2F (185 aa).

Positions 1 to 29 are interaction with UBA3; the sequence is MLTLASKLKRDDGVRGPRASNPASDSTRR. The interval 11 to 30 is disordered; it reads DDGVRGPRASNPASDSTRRV. Residues 32–185 enclose the UBC core domain; the sequence is VRDKLLVKEV…VEDYIKRYAR (154 aa). The Glycyl thioester intermediate role is filled by Cys-116.

It belongs to the ubiquitin-conjugating enzyme family. UBE2F subfamily.

The catalysed reaction is [E1 NEDD8-activating enzyme]-S-[NEDD8 protein]-yl-L-cysteine + [E2 NEDD8-conjugating enzyme]-L-cysteine = [E1 NEDD8-activating enzyme]-L-cysteine + [E2 NEDD8-conjugating enzyme]-S-[NEDD8-protein]-yl-L-cysteine.. It functions in the pathway protein modification; protein neddylation. In terms of biological role, accepts the ubiquitin-like protein NEDD8 from the UBA3-NAE1 E1 complex and catalyzes its covalent attachment to other proteins. Together with the E3 ubiquitin ligase RNF7/RBX2, specifically neddylates cullin-5 (CUL5). Does not neddylate CUL1, CUL2, CUL3, CUL4A or CUL4B. This is NEDD8-conjugating enzyme UBE2F (UBE2F) from Gallus gallus (Chicken).